Here is a 180-residue protein sequence, read N- to C-terminus: ADP-ribosylation factor 5 (180 aa).

G2 is lipidated: N-myristoyl glycine. GTP contacts are provided by residues G24–T31, D67–Q71, and N126–D129.

Belongs to the small GTPase superfamily. Arf family. As to quaternary structure, interacts (when activated) with GGA1, GGA2 and GGA3; the interaction is required for proper subcellular location of GGA1, GGA2 and GGA3. Binds ASAP2. Interacts with NCS1/FREQ at the Golgi complex. Interacts with RAB11FIP3 and RAB11FIP4.

It localises to the golgi apparatus. It is found in the cytoplasm. The protein resides in the perinuclear region. The protein localises to the membrane. Its subcellular location is the trans-Golgi network membrane. In terms of biological role, GTP-binding protein involved in protein trafficking; may modulate vesicle budding and uncoating within the Golgi apparatus. Functionally, (Microbial infection) Functions as an allosteric activator of the cholera toxin catalytic subunit, an ADP-ribosyltransferase. This chain is ADP-ribosylation factor 5 (ARF5), found in Homo sapiens (Human).